The sequence spans 197 residues: Dermorphin-1 (197 aa).

Residues 1–20 (MSFLKKSLLLILFLGLVSLS) form the signal peptide. Positions 21 to 45 (VCKEEKRETEEENENEENHEEGSEM) are excised as a propeptide. The interval 24-197 (EEKRETEEEN…GYPSGEAKKM (174 aa)) is disordered. Acidic residues predominate over residues 30–39 (EEENENEENH). The span at 40-62 (EEGSEMKRYMFHLMDGEAKKRDS) shows a compositional bias: basic and acidic residues. The residue at position 49 (Met-49) is a D-methionine. Asp-54 carries the aspartic acid 1-amide modification. A propeptide spanning residues 56–77 (EAKKRDSEENEIEENHEEGSEM) is cleaved from the precursor. Ala-81 is subject to D-alanine (Ala). Ser-86 carries the serine amide modification. Basic and acidic residues predominate over residues 88-97 (EAKKIKRVSE). Residues 88-112 (EAKKIKRVSEEENENEENHEEGSEM) constitute a propeptide that is removed on maturation. A D-alanine (Ala) modification is found at Ala-116. Ser-121 carries the post-translational modification Serine amide. Residues 123 to 132 (EAKKIKRESE) are compositionally biased toward basic and acidic residues. Residues 123–147 (EAKKIKRESEEEKEIEENHEEGSEM) constitute a propeptide that is removed on maturation. Ala-151 bears the D-alanine (Ala) mark. Ser-156 carries the post-translational modification Serine amide. Positions 158-182 (EAKKIKRESEEENENEENHEEGSEM) are excised as a propeptide. Positions 167-176 (EEENENEENH) are enriched in acidic residues. Ala-186 bears the D-alanine (Ala) mark. Ser-191 carries the post-translational modification Serine amide. Positions 193 to 197 (EAKKM) are excised as a propeptide.

The protein belongs to the frog skin active peptide (FSAP) family. Dermorphin subfamily. In terms of tissue distribution, expressed by the skin glands.

It is found in the secreted. Functionally, dermorphin has a very potent opiate-like activity. It has high affinity and selectivity for mu-type opioid receptors. Deltorphin has a very potent opiate-like activity. It has high affinity and selectivity for delta-type opioid receptors. In Phyllomedusa sauvagei (Sauvage's leaf frog), this protein is Dermorphin-1.